The primary structure comprises 360 residues: Mannonate dehydratase (360 aa).

Belongs to the mannonate dehydratase family. It depends on Fe(2+) as a cofactor. Requires Mn(2+) as cofactor.

It carries out the reaction D-mannonate = 2-dehydro-3-deoxy-D-gluconate + H2O. It functions in the pathway carbohydrate metabolism; pentose and glucuronate interconversion. Its function is as follows. Catalyzes the dehydration of D-mannonate. In Thermotoga maritima (strain ATCC 43589 / DSM 3109 / JCM 10099 / NBRC 100826 / MSB8), this protein is Mannonate dehydratase (uxuA).